A 790-amino-acid polypeptide reads, in one-letter code: Probable copper-transporting ATPase SynA (790 aa).

The Cytoplasmic segment spans residues 1–105 (MPAAIVHSAD…IPPLQQQRLQ (105 aa)). Residues 14–81 (TSILVEVEGM…EITGLGFRAQ (68 aa)) form the HMA domain. 2 residues coordinate Cu cation: Cys-25 and Cys-28. The chain crosses the membrane as a helical span at residues 106-125 (LAIAAFLLIVSSWGHLGHWL). Topologically, residues 126 to 134 (DHPLPGTDQ) are extracellular. Residues 135–154 (LWFHALLAIWALLGPGRSIL) traverse the membrane as a helical segment. Over 155–166 (QAGWQGLRCGAP) the chain is Cytoplasmic. Residues 167–189 (NMNSLVLLGTGSAYLASLVALLW) form a helical membrane-spanning segment. Residues 190 to 193 (PQLG) are Extracellular-facing. A helical transmembrane segment spans residues 194–211 (WVCFLDEPVMLLGFILLG). Residues 212–357 (RTLEEQARFR…RKAPVQRFAD (146 aa)) lie on the Cytoplasmic side of the membrane. A helical membrane pass occupies residues 358–380 (AIAGRFVYGVCAIAALTFGFWAT). The Extracellular segment spans residues 381–416 (LGSRWWPQVLQQPLPGLLIHAPHHGMEMAHPHSHSP). Residues 417–439 (LLLALTLAISVLVVACPCALGLA) form a helical membrane-spanning segment. Topologically, residues 440–726 (TPTAILVATG…QMGLRTIRQN (287 aa)) are cytoplasmic. Residue Asp-476 is the 4-aspartylphosphate intermediate of the active site. Mg(2+) is bound by residues Asp-669 and Asp-673. Residues 727–749 (LTWALGYNVVMLPLAAGAFLPAY) form a helical membrane-spanning segment. Residues 750–753 (GLAL) lie on the Extracellular side of the membrane. The helical transmembrane segment at 754-776 (TPAIAGACMAVSSLAVVSNSLLL) threads the bilayer. At 777–790 (RYWFRRSLNHSVSV) the chain is on the cytoplasmic side.

Belongs to the cation transport ATPase (P-type) (TC 3.A.3) family. Type IB subfamily.

It localises to the cell membrane. It carries out the reaction Cu(2+)(in) + ATP + H2O = Cu(2+)(out) + ADP + phosphate + H(+). Involved in copper transport. This is Probable copper-transporting ATPase SynA (synA) from Synechococcus sp. (strain ATCC 27144 / PCC 6301 / SAUG 1402/1) (Anacystis nidulans).